Reading from the N-terminus, the 368-residue chain is UPF0284 protein Tery_1555 (368 aa).

This sequence belongs to the UPF0284 family.

The sequence is that of UPF0284 protein Tery_1555 from Trichodesmium erythraeum (strain IMS101).